A 600-amino-acid chain; its full sequence is UvrABC system protein C (600 aa).

The GIY-YIG domain occupies 15 to 92 (EKPGCYLMKD…IKKYQPYYNV (78 aa)). A UVR domain is found at 197–232 (TSVKQDLTTKMEKASENLEFERAAEIRDQLKYIEET).

The protein belongs to the UvrC family. Interacts with UvrB in an incision complex.

It localises to the cytoplasm. The UvrABC repair system catalyzes the recognition and processing of DNA lesions. UvrC both incises the 5' and 3' sides of the lesion. The N-terminal half is responsible for the 3' incision and the C-terminal half is responsible for the 5' incision. The sequence is that of UvrABC system protein C from Lactobacillus acidophilus (strain ATCC 700396 / NCK56 / N2 / NCFM).